The sequence spans 453 residues: Maltotriose-binding protein (453 aa).

An N-terminal signal peptide occupies residues 1–29 (MKRGIYAVLLVGVLIFSVVASGCIGGTQT). Over residues 27–65 (TQTQTETQTPEKTQTPTTTQPSPTTTTSPTQTTSQTPTE) the composition is skewed to low complexity. Positions 27-73 (TQTQTETQTPEKTQTPTTTQPSPTTTTSPTQTTSQTPTETETHTQEA) are disordered.

This sequence belongs to the bacterial solute-binding protein 1 family.

Involved in an abc transport system for maltotriose. This is Maltotriose-binding protein (malE) from Pyrococcus abyssi (strain GE5 / Orsay).